The sequence spans 567 residues: Proline--tRNA ligase (567 aa).

It belongs to the class-II aminoacyl-tRNA synthetase family. ProS type 1 subfamily. Homodimer.

The protein localises to the cytoplasm. The catalysed reaction is tRNA(Pro) + L-proline + ATP = L-prolyl-tRNA(Pro) + AMP + diphosphate. Its function is as follows. Catalyzes the attachment of proline to tRNA(Pro) in a two-step reaction: proline is first activated by ATP to form Pro-AMP and then transferred to the acceptor end of tRNA(Pro). As ProRS can inadvertently accommodate and process non-cognate amino acids such as alanine and cysteine, to avoid such errors it has two additional distinct editing activities against alanine. One activity is designated as 'pretransfer' editing and involves the tRNA(Pro)-independent hydrolysis of activated Ala-AMP. The other activity is designated 'posttransfer' editing and involves deacylation of mischarged Ala-tRNA(Pro). The misacylated Cys-tRNA(Pro) is not edited by ProRS. The protein is Proline--tRNA ligase of Campylobacter fetus subsp. fetus (strain 82-40).